Reading from the N-terminus, the 132-residue chain is ATP synthase epsilon chain (132 aa).

This sequence belongs to the ATPase epsilon chain family. In terms of assembly, F-type ATPases have 2 components, CF(1) - the catalytic core - and CF(0) - the membrane proton channel. CF(1) has five subunits: alpha(3), beta(3), gamma(1), delta(1), epsilon(1). CF(0) has three main subunits: a, b and c.

The protein localises to the cell inner membrane. Its function is as follows. Produces ATP from ADP in the presence of a proton gradient across the membrane. This Anaeromyxobacter dehalogenans (strain 2CP-C) protein is ATP synthase epsilon chain.